A 142-amino-acid chain; its full sequence is Phosphoribosyl-AMP cyclohydrolase (142 aa).

Asp-92 lines the Mg(2+) pocket. Cys-93 contributes to the Zn(2+) binding site. Residues Asp-94 and Asp-96 each coordinate Mg(2+). The Zn(2+) site is built by Cys-109 and Cys-116.

This sequence belongs to the PRA-CH family. Homodimer. Requires Mg(2+) as cofactor. Zn(2+) is required as a cofactor.

Its subcellular location is the cytoplasm. It carries out the reaction 1-(5-phospho-beta-D-ribosyl)-5'-AMP + H2O = 1-(5-phospho-beta-D-ribosyl)-5-[(5-phospho-beta-D-ribosylamino)methylideneamino]imidazole-4-carboxamide. The protein operates within amino-acid biosynthesis; L-histidine biosynthesis; L-histidine from 5-phospho-alpha-D-ribose 1-diphosphate: step 3/9. Functionally, catalyzes the hydrolysis of the adenine ring of phosphoribosyl-AMP. This is Phosphoribosyl-AMP cyclohydrolase from Alkalilimnicola ehrlichii (strain ATCC BAA-1101 / DSM 17681 / MLHE-1).